Here is a 904-residue protein sequence, read N- to C-terminus: Copper-transporting ATPase ccc2 (904 aa).

At 1–172 (MYTTTLSVQG…GSQIRVWKIR (172 aa)) the chain is on the cytoplasmic side. The HMA domain occupies 2–68 (YTTTLSVQGM…KIEDCGFDAS (67 aa)). Cu(+) is bound by residues cysteine 13 and cysteine 16. Residues 173–193 (FIISISFSLAVMFLPQIFDSC) form a helical membrane-spanning segment. The Lumenal, vesicle portion of the chain corresponds to 194–197 (DSMR). Residues 198-218 (AAFLVPHYFGICAGHIISLVL) traverse the membrane as a helical segment. Residues 219–246 (SLPVQFGVGRVYYSAAYHALKRGTANMD) are Cytoplasmic-facing. Residues 247–267 (VLVSLGSTVAFAASIFFMILY) form a helical membrane-spanning segment. Residues 268-278 (SARHADNPAPI) lie on the Lumenal, vesicle side of the membrane. Residues 279–296 (FFDTADMLLTFVTLGRYL) form a helical membrane-spanning segment. The Cytoplasmic segment spans residues 297–431 (ESKAKGSTSA…PIQQFADRVA (135 aa)). The helical transmembrane segment at 432–452 (GIFVPVIVALSISTFTFWFLF) threads the bilayer. At 453-469 (TKYSSKYPSVFDDPMGK) the chain is on the lumenal, vesicle side. The helical transmembrane segment at 470-490 (FAVCLKLTISVVVVACPCALG) threads the bilayer. Over 491–805 (LSTPTAVMVG…RIKMNLVWAC (315 aa)) the chain is Cytoplasmic. Residue aspartate 529 is the 4-aspartylphosphate intermediate of the active site. Mg(2+) is bound by residues aspartate 742 and aspartate 746. A helical membrane pass occupies residues 806 to 826 (IYNFVMIPIAMGFFLPWGIYL). Over 827–828 (NP) the chain is Lumenal, vesicle. A helical membrane pass occupies residues 829 to 849 (MWASAAMMFSSLSVLASSLLL). At 850–904 (RRWKKPKSLIFSEADDVETESSTNSSVLQKVYTATRSIFGRNKSSNKYQPVANEV) the chain is on the cytoplasmic side.

Belongs to the cation transport ATPase (P-type) (TC 3.A.3) family. Type IB subfamily.

The protein resides in the golgi apparatus. It localises to the trans-Golgi network membrane. It catalyses the reaction Cu(+)(in) + ATP + H2O = Cu(+)(out) + ADP + phosphate + H(+). Its function is as follows. Probably involved in copper transport and in the regulation of cellular copper level. Retrieves copper from the metallochaperone atx1 and incorporates it into trans-Golgi vesicles. This chain is Copper-transporting ATPase ccc2 (ccc2), found in Schizosaccharomyces pombe (strain 972 / ATCC 24843) (Fission yeast).